The following is a 164-amino-acid chain: uncharacterized protein (164 aa).

The segment covering 1–29 (MLCVRSSSSNLESDTYLSRYSTRASAGTG) has biased composition (polar residues). The tract at residues 1–62 (MLCVRSSSSN…SKPSNNKNID (62 aa)) is disordered. The segment covering 43–62 (SSDSSSSSSESKPSNNKNID) has biased composition (low complexity).

This is an uncharacterized protein from Schizosaccharomyces pombe (strain 972 / ATCC 24843) (Fission yeast).